A 757-amino-acid chain; its full sequence is Ecdysone receptor (757 aa).

The segment at M1–L300 is modulating. 2 disordered regions span residues N126–G192 and L235–K289. Positions V128–P138 are enriched in gly residues. The segment covering N167 to H183 has biased composition (low complexity). 2 consecutive NR C4-type zinc fingers follow at residues C301–C321 and C337–C361. The segment at residues C301–P373 is a DNA-binding region (nuclear receptor). The 236-residue stretch at N442 to A677 folds into the NR LBD domain. Residues T717 to T734 show a composition bias toward low complexity. The segment at T717–A739 is disordered.

The protein belongs to the nuclear hormone receptor family. NR1 subfamily.

The protein localises to the nucleus. Its function is as follows. Receptor for ecdysone. Binds to ecdysone response elements (ECRES). This Lucilia cuprina (Green bottle fly) protein is Ecdysone receptor (EcR).